The primary structure comprises 346 residues: Very-long-chain 3-oxoacyl-CoA reductase (346 aa).

Residues 26–46 (TASVLLVAGGWFVVSRVWTFL) traverse the membrane as a helical segment. NADP(+) is bound by residues I71, D126, D134, N153, Y220, K224, I253, and S255. Y220 (proton donor) is an active-site residue. K224 (lowers pKa of active site Tyr) is an active-site residue.

It belongs to the short-chain dehydrogenases/reductases (SDR) family.

It localises to the endoplasmic reticulum membrane. It carries out the reaction a very-long-chain (3R)-3-hydroxyacyl-CoA + NADP(+) = a very-long-chain 3-oxoacyl-CoA + NADPH + H(+). The protein operates within lipid metabolism; fatty acid biosynthesis. In terms of biological role, component of the microsomal membrane bound fatty acid elongation system, which produces the 26-carbon very long-chain fatty acids (VLCFA) from palmitate. Catalyzes the reduction of the 3-ketoacyl-CoA intermediate that is formed in each cycle of fatty acid elongation. VLCFAs serve as precursors for ceramide and sphingolipids. The protein is Very-long-chain 3-oxoacyl-CoA reductase of Emericella nidulans (strain FGSC A4 / ATCC 38163 / CBS 112.46 / NRRL 194 / M139) (Aspergillus nidulans).